We begin with the raw amino-acid sequence, 355 residues long: Probable nitronate monooxygenase (355 aa).

FMN-binding positions include N71, Q175, G180, G218, and 237–240 (QMGT).

Belongs to the nitronate monooxygenase family. NMO class I subfamily. Requires FMN as cofactor.

The enzyme catalyses 3 propionate 3-nitronate + 3 O2 + H2O = 3 3-oxopropanoate + 2 nitrate + nitrite + H2O2 + 3 H(+). Its function is as follows. Nitronate monooxygenase that uses molecular oxygen to catalyze the oxidative denitrification of alkyl nitronates. Acts on propionate 3-nitronate (P3N), the presumed physiological substrate. Probably functions in the detoxification of P3N, a metabolic poison produced by plants and fungi as a defense mechanism. The protein is Probable nitronate monooxygenase of Staphylococcus aureus (strain JH1).